We begin with the raw amino-acid sequence, 628 residues long: Putative pentatricopeptide repeat-containing protein At3g13770, mitochondrial (628 aa).

A mitochondrion-targeting transit peptide spans 1 to 19 (MFNLMRLIHRSFSSSPTNY). PPR repeat units lie at residues 51–85 (GFHG…RYLP), 86–116 (ATYL…MPEK), 117–151 (NVVS…DGKP), 152–186 (NEFT…NYDS), 187–217 (HIFV…LPER), 218–252 (DVVS…GMSP), 253–287 (NYVT…ELPF), 288–318 (YAVL…MPER), 319–353 (TAIS…KRVK), 355–389 (DAVT…EYGT), and 392–422 (GTEH…MPSK). Residues 427–502 (VLGSLLGACR…EPGRSWIQHE (76 aa)) are type E motif. Positions 503 to 533 (QTLHYFHANDRTHPRREEVLAKMKEISIKMK) are type E(+) motif. A type DYW motif region spans residues 534-628 (QAGYVPDLSC…DGICSCGDYW (95 aa)).

This sequence belongs to the PPR family. PCMP-H subfamily.

The protein localises to the mitochondrion. In Arabidopsis thaliana (Mouse-ear cress), this protein is Putative pentatricopeptide repeat-containing protein At3g13770, mitochondrial (PCMP-H85).